A 696-amino-acid chain; its full sequence is Golgi integral membrane protein 4 (696 aa).

A lipid anchor (N-myristoyl glycine) is attached at glycine 2. At 2–12 the chain is on the cytoplasmic side; the sequence is GNGMCSRKQKR. Residues 13-33 traverse the membrane as a helical; Signal-anchor for type II membrane protein segment; that stretch reads IFQTLLLLTVVFGFLYGAMLY. Residues 34–696 lie on the Lumenal side of the membrane; the sequence is YELQTQLRKA…AEKSHRRAEM (663 aa). The stretch at 35-244 forms a coiled coil; it reads ELQTQLRKAE…KQLKDTLNRI (210 aa). Positions 38-107 are golgi targeting; that stretch reads TQLRKAEAVA…ETLNKGRQDS (70 aa). Residues 80–175 form an endosome targeting region; sequence LEHKKAKEDF…QELSKLKETV (96 aa). 3 disordered regions span residues 122-145, 244-391, and 427-696; these read KSQH…QGED, IPSL…HARA, and LREH…RAEM. Residues 123–145 are compositionally biased toward basic and acidic residues; that stretch reads SQHEELKKQHSDLEEEHRKQGED. The segment at 176–248 is golgi targeting; the sequence is YNLREENRQL…DTLNRIPSLR (73 aa). Polar residues predominate over residues 254 to 269; the sequence is EQQNVTQVAHSPQGYN. Asparagine 257 carries N-linked (GlcNAc...) asparagine glycosylation. 5 stretches are compositionally biased toward basic and acidic residues: residues 271 to 281, 298 to 313, 324 to 343, 355 to 364, and 370 to 380; these read AREKPTREVQE, RAED…KEAE, EVER…RKAL, EHLEEEHDPS, and REWKEQHEQRE. Residue serine 364 is modified to Phosphoserine. Residues 436–453 are compositionally biased toward low complexity; it reads QQRLQGHLLRQQEQQQQQ. Basic and acidic residues-rich tracts occupy residues 464–476 and 505–545; these read AELE…HQEQ and AYER…RAAV. Serine 538 is modified (phosphoserine). Over residues 604–626 the composition is skewed to acidic residues; the sequence is QQEDNVDEQYQEEAEEEVQEDLT. The residue at position 613 (tyrosine 613) is a Phosphotyrosine. Position 626 is a phosphothreonine (threonine 626). Composition is skewed to basic and acidic residues over residues 627-638 and 661-672; these read EEKKRELEHNAE and RDDNRPKGREEH. Tyrosine 673 is modified (phosphotyrosine). Positions 673-683 are enriched in acidic residues; the sequence is YEEEEEEEEDG.

It belongs to the GOLIM4 family. Phosphorylated probably by c-AMP-dependent kinases in its lumenal part. Post-translationally, O-glycosylated; modified by sialic acid residues. In terms of processing, N-glycosylated; N-glycans are probably of the complex type and modified by sialic acid residues.

Its subcellular location is the golgi apparatus. The protein resides in the golgi stack membrane. The protein localises to the endosome membrane. It is found in the membrane. Functionally, plays a role in endosome to Golgi protein trafficking; mediates protein transport along the late endosome-bypass pathway from the early endosome to the Golgi. The chain is Golgi integral membrane protein 4 (GOLIM4) from Homo sapiens (Human).